The sequence spans 462 residues: L-seryl-tRNA(Sec) selenium transferase (462 aa).

Position 293 is an N6-(pyridoxal phosphate)lysine (Lys293).

It belongs to the SelA family. Pyridoxal 5'-phosphate serves as cofactor.

It localises to the cytoplasm. It catalyses the reaction L-seryl-tRNA(Sec) + selenophosphate + H(+) = L-selenocysteinyl-tRNA(Sec) + phosphate. The protein operates within aminoacyl-tRNA biosynthesis; selenocysteinyl-tRNA(Sec) biosynthesis; selenocysteinyl-tRNA(Sec) from L-seryl-tRNA(Sec) (bacterial route): step 1/1. Converts seryl-tRNA(Sec) to selenocysteinyl-tRNA(Sec) required for selenoprotein biosynthesis. The polypeptide is L-seryl-tRNA(Sec) selenium transferase (Clostridium botulinum (strain ATCC 19397 / Type A)).